We begin with the raw amino-acid sequence, 131 residues long: Methylglyoxal synthase (131 aa).

One can recognise an MGS-like domain in the interval 1–131 (MKIALIAHDK…GDLDYRKLRK (131 aa)). Substrate-binding positions include histidine 8, lysine 12, 34-37 (TGTT), and 54-55 (SG). The active-site Proton donor/acceptor is aspartate 60. Histidine 87 lines the substrate pocket.

Belongs to the methylglyoxal synthase family.

It catalyses the reaction dihydroxyacetone phosphate = methylglyoxal + phosphate. In terms of biological role, catalyzes the formation of methylglyoxal from dihydroxyacetone phosphate. The protein is Methylglyoxal synthase of Bacillus anthracis (strain A0248).